Reading from the N-terminus, the 584-residue chain is DNA damage-binding protein 2 (584 aa).

Residues 1–87 (MGPTTRARFV…PVAAAARSGR (87 aa)) form a disordered region. A compositionally biased stretch (basic residues) spans 8–20 (RFVHNRRRRRRRG). Composition is skewed to acidic residues over residues 25 to 35 (PDDDDEEEDQQ) and 45 to 66 (DEGE…DGEA). The CCHC-type zinc finger occupies 122 to 140 (KPCFLCKMPGGHTTLTCPH). 7 WD repeats span residues 192 to 232 (FHQR…EKIT), 236 to 278 (VHSC…SLLN), 288 to 327 (STWR…RIGD), 333 to 373 (KKGS…PNSA), 378 to 418 (AHGR…LESP), 438 to 481 (EWDP…LAEV), and 484 to 523 (PDIT…DATE). Positions 351 to 366 (LLSSGNDHYARIWDTR) match the DWD box motif. The span at 517–532 (TESDATEERNREKAKE) shows a compositional bias: basic and acidic residues. Residues 517-584 (TESDATEERN…TIKGKGKSKV (68 aa)) form a disordered region. Residues 562-584 (KKKKKAKKTRFTHTIKGKGKSKV) show a composition bias toward basic residues.

Belongs to the WD repeat DDB2/WDR76 family. As to quaternary structure, component of the UV-DDB complex, which is composed of DDB1 and DDB2. In terms of tissue distribution, expressed in proliferating tissues such as shoot apical meristem (SAM), root tips and young leaves. Not detected in mature leaves.

The protein resides in the nucleus. Required for DNA repair. Binds to DDB1 to form the UV-damaged DNA-binding protein complex (the UV-DDB complex). The UV-DDB complex may recognize UV-induced DNA damage and recruit proteins of the nucleotide excision repair pathway (the NER pathway) to initiate DNA repair. May function as the substrate recognition module for a DCX (DDB1-CUL4-X-box) E3 ubiquitin-protein ligase complex. This Oryza sativa subsp. japonica (Rice) protein is DNA damage-binding protein 2.